A 403-amino-acid chain; its full sequence is RNA-binding motif, single-stranded-interacting protein 1 (403 aa).

The disordered stretch occupies residues 30–56 (PAHPMAPPSPSTTSSNNNSSSSSNSGW). Residues 40-54 (STTSSNNNSSSSSNS) show a composition bias toward low complexity. 2 RRM domains span residues 62-135 (TNLY…MAKQ) and 141-226 (TNLY…FADG). Phosphothreonine is present on Thr-208. Residues 382–395 (GQQQVAVETSNDHS) are compositionally biased toward polar residues. The interval 382–403 (GQQQVAVETSNDHSPYTFPPNK) is disordered.

Ubiquitous. Expressed in all tissues except testis.

It localises to the nucleus. Its function is as follows. Single-stranded DNA binding protein that interacts with the region upstream of the MYC gene. Binds specifically to the DNA sequence motif 5'-[AT]CT[AT][AT]T-3'. Probably has a role in DNA replication. This Mus musculus (Mouse) protein is RNA-binding motif, single-stranded-interacting protein 1 (Rbms1).